The primary structure comprises 582 residues: ATP-dependent lipid A-core flippase (582 aa).

The next 5 membrane-spanning stretches (helical) occupy residues 16-36, 64-84, 153-173, 253-273, and 275-295; these read LWPT…ALIL, LLWM…TSYI, IIGL…ILVV, PIIQ…ASFP, and VMDS…IALM. The ABC transmembrane type-1 domain occupies 28 to 310; sequence IVAGIALILN…LTNVNAQFQR (283 aa). An ABC transporter domain is found at 342–578; it reads LEFRNVTFTY…HGVYAQLHKM (237 aa). Residue 376-383 coordinates ATP; it reads GRSGSGKS.

Belongs to the ABC transporter superfamily. Lipid exporter (TC 3.A.1.106) family. Homodimer.

The protein localises to the cell inner membrane. The catalysed reaction is ATP + H2O + lipid A-core oligosaccharideSide 1 = ADP + phosphate + lipid A-core oligosaccharideSide 2.. Involved in lipopolysaccharide (LPS) biosynthesis. Translocates lipid A-core from the inner to the outer leaflet of the inner membrane. Transmembrane domains (TMD) form a pore in the inner membrane and the ATP-binding domain (NBD) is responsible for energy generation. The polypeptide is ATP-dependent lipid A-core flippase (Salmonella paratyphi A (strain ATCC 9150 / SARB42)).